Consider the following 804-residue polypeptide: Probable phosphoketolase (804 aa).

It belongs to the XFP family. Thiamine diphosphate serves as cofactor.

The sequence is that of Probable phosphoketolase from Mycobacterium avium (strain 104).